A 607-amino-acid chain; its full sequence is Albumin (607 aa).

The first 18 residues, 1 to 18 (MKWVTFVSLLFLFSSAYF), serve as a signal peptide directing secretion. Residues 19 to 24 (RGVLRR) constitute a propeptide that is removed on maturation. 3 Albumin domains span residues 19–209 (RGVL…DALK), 210–402 (ERIL…QFTP), and 403–600 (LVEE…KLVA). H27 provides a ligand contact to Cu cation. At S29 the chain carries Phosphoserine. Residues E30 and D37 each coordinate Ca(2+). C77 and C86 are disulfide-bonded. Residues S82 and S89 each carry the phosphoserine modification. H91 is a binding site for Zn(2+). 6 disulfide bridges follow: C99–C115, C114–C125, C147–C192, C191–C200, C223–C269, and C268–C276. T107 bears the Phosphothreonine mark. Position 228 is an N6-succinyllysine (K228). E267 contacts Ca(2+). The Zn(2+) site is built by H270 and D272. Positions 272, 275, 278, and 282 each coordinate Ca(2+). Disulfide bonds link C288/C302, C301/C312, C339/C384, C383/C392, C415/C461, C460/C471, C484/C500, and C499/C510. S442 bears the Phosphoserine mark. Residues T443 and T445 each carry the phosphothreonine modification. S512 is subject to Phosphoserine. 2 cysteine pairs are disulfide-bonded: C537-C582 and C581-C590. K557 bears the N6-methyllysine mark. T569 bears the Phosphothreonine mark. Residue K587 is modified to N6-succinyllysine.

The protein belongs to the ALB/AFP/VDB family. Interacts with FCGRT; this interaction regulates ALB homeostasis. Interacts with TASOR. In plasma, occurs in a covalently-linked complex with chromophore-bound alpha-1-microglobulin; this interaction does not prevent fatty acid binding to ALB. Post-translationally, phosphorylated by FAM20C in the extracellular medium. As to expression, plasma.

The protein resides in the secreted. Its function is as follows. Binds water, Ca(2+), Na(+), K(+), fatty acids, hormones, bilirubin and drugs. Its main function is the regulation of the colloidal osmotic pressure of blood. Major zinc transporter in plasma, typically binds about 80% of all plasma zinc. Major calcium and magnesium transporter in plasma, binds approximately 45% of circulating calcium and magnesium in plasma. Potentially has more than two calcium-binding sites and might additionally bind calcium in a non-specific manner. The shared binding site between zinc and calcium at residue Asp-272 suggests a crosstalk between zinc and calcium transport in the blood. The rank order of affinity is zinc &gt; calcium &gt; magnesium. Binds to the bacterial siderophore enterobactin and inhibits enterobactin-mediated iron uptake of E.coli from ferric transferrin, and may thereby limit the utilization of iron and growth of enteric bacteria such as E.coli. Does not prevent iron uptake by the bacterial siderophore aerobactin. The protein is Albumin (ALB) of Equus asinus (Donkey).